A 196-amino-acid chain; its full sequence is Endoribonuclease YbeY (196 aa).

Zn(2+)-binding residues include His-120, His-124, and His-130.

It belongs to the endoribonuclease YbeY family. It depends on Zn(2+) as a cofactor.

The protein resides in the cytoplasm. In terms of biological role, single strand-specific metallo-endoribonuclease involved in late-stage 70S ribosome quality control and in maturation of the 3' terminus of the 16S rRNA. This Corynebacterium glutamicum (strain R) protein is Endoribonuclease YbeY.